Reading from the N-terminus, the 655-residue chain is Threonine--tRNA ligase (655 aa).

Residues 1–66 enclose the TGS domain; it reads MIDLVFPDGS…TGERKFEILT (66 aa). The interval 248 to 540 is catalytic; it reads DHRKLGKTMD…LLENFAGALP (293 aa). 3 residues coordinate Zn(2+): Cys-340, His-391, and His-517.

This sequence belongs to the class-II aminoacyl-tRNA synthetase family. Homodimer. It depends on Zn(2+) as a cofactor.

Its subcellular location is the cytoplasm. It carries out the reaction tRNA(Thr) + L-threonine + ATP = L-threonyl-tRNA(Thr) + AMP + diphosphate + H(+). In terms of biological role, catalyzes the attachment of threonine to tRNA(Thr) in a two-step reaction: L-threonine is first activated by ATP to form Thr-AMP and then transferred to the acceptor end of tRNA(Thr). Also edits incorrectly charged L-seryl-tRNA(Thr). The chain is Threonine--tRNA ligase from Caulobacter vibrioides (strain ATCC 19089 / CIP 103742 / CB 15) (Caulobacter crescentus).